Here is a 187-residue protein sequence, read N- to C-terminus: Rusticyanin (187 aa).

A signal peptide spans 1–32; the sequence is MYTQNTMKKNWYVTVGAAAALAATVGMGTAMA. The 103-residue stretch at 85–187 folds into the Plastocyanin-like domain; it reads SFEVHDKKNP…TGMFGKIVVK (103 aa). The Cu cation site is built by histidine 117, cysteine 170, histidine 175, and methionine 180.

Monomer. It depends on Cu cation as a cofactor.

The protein localises to the periplasm. Functionally, electron carrier from cytochrome c552 to the A-type oxidase. The polypeptide is Rusticyanin (rus) (Acidithiobacillus ferrooxidans (strain ATCC 23270 / DSM 14882 / CIP 104768 / NCIMB 8455) (Ferrobacillus ferrooxidans (strain ATCC 23270))).